The primary structure comprises 447 residues: T-box transcription factor TBX20 (447 aa).

Positions 62–81 are disordered; that stretch reads DAHGEFGGGSGSSPSSSSLC. Residues 109-288 constitute a DNA-binding region (T-box); sequence LWDKFHELGT…SNPFAKGFRD (180 aa). Residues 316 to 340 are disordered; the sequence is TYGGEEDVLGDESQTTPNRGSAFTT. Residues 327–340 are compositionally biased toward polar residues; it reads ESQTTPNRGSAFTT.

The protein localises to the nucleus. Functionally, acts as a transcriptional activator and repressor required for cardiac development and may have key roles in the maintenance of functional and structural phenotypes in adult heart. This is T-box transcription factor TBX20 (TBX20) from Homo sapiens (Human).